Consider the following 63-residue polypeptide: Adipokinetic prohormone type 1 (63 aa).

Residues 1–22 (MVQRCLVVALLVVVVAAALCSA) form the signal peptide. Residue glutamine 23 is modified to Pyrrolidone carboxylic acid. Threonine 32 carries the post-translational modification Threonine amide.

It belongs to the AKH/HRTH/RPCH family. As to quaternary structure, adipokinetic hormone precursor-related peptide (APRP) can form three type of disulfide-bond dimers: p1 (alpha-alpha), p2 (alpha-beta), and p3 (beta-beta).

The protein resides in the secreted. This hormone, released from cells in the corpora cardiaca, causes release of diglycerides from the fat body and stimulation of muscles to use these diglycerides as an energy source during energy-demanding processes. The chain is Adipokinetic prohormone type 1 from Schistocerca nitens (Vagrant locust).